The chain runs to 390 residues: MPLRFTKLTVEKKQVMKESHYLTAQPANHDKKVIVGMSGGVDSSVSALILMQQGYQVEGLFMKNWDEDDGTEYCTAKDDLADAQAVSDKLGIKLHTANFASEYWDNVFEHFLAEYKAGRTPNPDILCNKEIKFKAFLEYAMALNADYIATGHYVRRGEKNGEPLLLKGLDGNKDQSYFLYAVGKDEIAKTLFPVGELEKTEVRRLAEEFGLITHNKKDSTGICFIGERRFKDFLEQYLPAQPGDIETLEGDKIARHHGLMYHTIGQRQGLGIGGLAKYSDDPWYVVEKDLERNVLIVTQGGQHESLFKTHLIADNFDWVAREKPTFPLTCKAKCRYRQSDQECTINELADGRVEVSFVEPQRAVTPGQSVVFYVDDVCLGGGIINVAFNK.

Residues 36–43 and Met62 each bind ATP; that span reads GMSGGVDS. Residues 122–124 form an interaction with target base in tRNA region; it reads NPD. The active-site Nucleophile is the Cys127. A disulfide bridge links Cys127 with Cys223. Residue Gly151 coordinates ATP. The segment at 173 to 175 is interaction with tRNA; sequence KDQ. Cys223 acts as the Cysteine persulfide intermediate in catalysis. The tract at residues 335 to 336 is interaction with tRNA; it reads RY.

The protein belongs to the MnmA/TRMU family.

Its subcellular location is the cytoplasm. It catalyses the reaction S-sulfanyl-L-cysteinyl-[protein] + uridine(34) in tRNA + AH2 + ATP = 2-thiouridine(34) in tRNA + L-cysteinyl-[protein] + A + AMP + diphosphate + H(+). Functionally, catalyzes the 2-thiolation of uridine at the wobble position (U34) of tRNA, leading to the formation of s(2)U34. The sequence is that of tRNA-specific 2-thiouridylase MnmA from Marinomonas sp. (strain MWYL1).